The chain runs to 281 residues: Protein NipSnap homolog 2 (281 aa).

The transit peptide at 1–27 directs the protein to the mitochondrion; the sequence is MAARVLLARGGLLRPAAQSAFLPGLRT.

It belongs to the NipSnap family. Interacts with CALCOCO2/NDP52, NBR1, SQSTM1/p62, TAX1BP1 and WDFY3/ALFY. Interacts with ATG8 family proteins (MAP1LC3A, MAP1LC3B, MAP1LC3C, GABARAP, GABARAPL1 and GABARAPL2). Interacts with VDAC1.

Its subcellular location is the mitochondrion matrix. The protein localises to the cytoplasm. Functionally, protein involved in mitophagy by facilitating recruitment of the autophagy machinery required for clearance of damaged mitochondria. Accumulates on the mitochondria surface in response to mitochondrial depolarization and acts as a 'eat me' signal by recruiting proteins involved in selective autophagy, such as autophagy receptors (CALCOCO2/NDP52, NBR1, SQSTM1/p62, TAX1BP1 and WDFY3/ALFY) and ATG8 family proteins (MAP1LC3A, MAP1LC3B, MAP1LC3C, GABARAP, GABARAPL1 and GABARAPL2). May act as a positive regulator of L-type calcium channels. The sequence is that of Protein NipSnap homolog 2 from Mus musculus (Mouse).